The chain runs to 233 residues: N-(5'-phosphoribosyl)anthranilate isomerase (233 aa).

The protein belongs to the TrpF family.

It carries out the reaction N-(5-phospho-beta-D-ribosyl)anthranilate = 1-(2-carboxyphenylamino)-1-deoxy-D-ribulose 5-phosphate. Its pathway is amino-acid biosynthesis; L-tryptophan biosynthesis; L-tryptophan from chorismate: step 3/5. The sequence is that of N-(5'-phosphoribosyl)anthranilate isomerase from Synechococcus sp. (strain JA-2-3B'a(2-13)) (Cyanobacteria bacterium Yellowstone B-Prime).